We begin with the raw amino-acid sequence, 706 residues long: Ribosomal RNA large subunit methyltransferase K/L (706 aa).

In terms of domain architecture, THUMP spans 43 to 154 (LMYQSLLWSR…RDMASVALDL (112 aa)).

It belongs to the methyltransferase superfamily. RlmKL family.

It localises to the cytoplasm. It catalyses the reaction guanosine(2445) in 23S rRNA + S-adenosyl-L-methionine = N(2)-methylguanosine(2445) in 23S rRNA + S-adenosyl-L-homocysteine + H(+). The enzyme catalyses guanosine(2069) in 23S rRNA + S-adenosyl-L-methionine = N(2)-methylguanosine(2069) in 23S rRNA + S-adenosyl-L-homocysteine + H(+). Functionally, specifically methylates the guanine in position 2445 (m2G2445) and the guanine in position 2069 (m7G2069) of 23S rRNA. This is Ribosomal RNA large subunit methyltransferase K/L from Yersinia pseudotuberculosis serotype IB (strain PB1/+).